Here is a 338-residue protein sequence, read N- to C-terminus: ATP synthase subunit a (338 aa).

A helical membrane pass occupies residues Ile-15–Glu-35. The segment at Ala-45–Gly-66 is disordered. Over residues His-49–His-65 the composition is skewed to basic and acidic residues. A run of 7 helical transmembrane segments spans residues His-109–Asn-129, Leu-174–Ala-194, Asn-199–Ile-219, Ala-238–Leu-258, Leu-262–Ile-282, Ile-287–Val-307, and Ser-308–Ala-328.

This sequence belongs to the ATPase A chain family. F-type ATPases have 2 components, CF(1) - the catalytic core - and CF(0) - the membrane proton channel. CF(1) has five subunits: alpha(3), beta(3), gamma(1), delta(1), epsilon(1). CF(0) has four main subunits: a, b, b' and c.

It localises to the cell inner membrane. In terms of biological role, key component of the proton channel; it plays a direct role in the translocation of protons across the membrane. This chain is ATP synthase subunit a, found in Chlorobium phaeobacteroides (strain BS1).